The primary structure comprises 130 residues: Guanyl-specific ribonuclease T1 (130 aa).

An N-terminal signal peptide occupies residues 1-26 (MMYSKLLTLTTLLLPTALALPSLVER). Disulfide bonds link Cys28-Cys36 and Cys32-Cys129. His66 is a catalytic residue. The active-site Proton acceptor is the Glu84. The active-site Proton donor is the His118.

It belongs to the ribonuclease N1/T1 family. In terms of assembly, monomer.

It catalyses the reaction [RNA] containing guanosine + H2O = an [RNA fragment]-3'-guanosine-3'-phosphate + a 5'-hydroxy-ribonucleotide-3'-[RNA fragment].. This Aspergillus oryzae (strain ATCC 42149 / RIB 40) (Yellow koji mold) protein is Guanyl-specific ribonuclease T1 (rntA).